The sequence spans 158 residues: Crossover junction endodeoxyribonuclease RuvC (158 aa).

Catalysis depends on residues D7, E66, and D139. D7, E66, and D139 together coordinate Mg(2+).

It belongs to the RuvC family. In terms of assembly, homodimer which binds Holliday junction (HJ) DNA. The HJ becomes 2-fold symmetrical on binding to RuvC with unstacked arms; it has a different conformation from HJ DNA in complex with RuvA. In the full resolvosome a probable DNA-RuvA(4)-RuvB(12)-RuvC(2) complex forms which resolves the HJ. Requires Mg(2+) as cofactor.

It localises to the cytoplasm. The enzyme catalyses Endonucleolytic cleavage at a junction such as a reciprocal single-stranded crossover between two homologous DNA duplexes (Holliday junction).. The RuvA-RuvB-RuvC complex processes Holliday junction (HJ) DNA during genetic recombination and DNA repair. Endonuclease that resolves HJ intermediates. Cleaves cruciform DNA by making single-stranded nicks across the HJ at symmetrical positions within the homologous arms, yielding a 5'-phosphate and a 3'-hydroxyl group; requires a central core of homology in the junction. The consensus cleavage sequence is 5'-(A/T)TT(C/G)-3'. Cleavage occurs on the 3'-side of the TT dinucleotide at the point of strand exchange. HJ branch migration catalyzed by RuvA-RuvB allows RuvC to scan DNA until it finds its consensus sequence, where it cleaves and resolves the cruciform DNA. The polypeptide is Crossover junction endodeoxyribonuclease RuvC (Campylobacter jejuni subsp. jejuni serotype O:6 (strain 81116 / NCTC 11828)).